Consider the following 1138-residue polypeptide: Mastermind-like protein 3 (1138 aa).

Positions 37–48 (PNSTPAAPSSNH) are enriched in polar residues. Disordered regions lie at residues 37-68 (PNST…AAVP), 119-148 (EQRA…ASAE), 169-188 (RSPL…FSPT), 207-237 (PSNM…THTP), 334-480 (EEKK…QRAK), and 503-547 (QQQQ…PQAF). Residues 52 to 64 (GGCGGSGGPGGGS) show a composition bias toward gly residues. Composition is skewed to polar residues over residues 130 to 139 (GKQQHPSKPQ) and 173 to 188 (NGDQ…FSPT). 2 stretches are compositionally biased toward polar residues: residues 343-359 (QPAT…SVKS) and 372-394 (GSPQ…ATSL). A compositionally biased stretch (low complexity) spans 395–411 (PSVASTPAAPNPASSPA). Positions 414-426 (AVQSPQTPNQAHT) are enriched in polar residues. The segment covering 467 to 480 (QLKQMAAQQQQRAK) has biased composition (low complexity). An N6-acetyllysine modification is found at Lys603. Disordered stretches follow at residues 615–662 (RMTP…PRAH), 691–721 (HGQE…MVSG), 968–991 (LQGM…YPLQ), 1024–1084 (AAMG…SQAY), and 1090–1109 (QDVS…PGLP). Over residues 633-649 (QQQQQQQQQQQQQQQQQ) the composition is skewed to low complexity. Over residues 1064–1084 (PPAQQQIPSGSFAPSSQSQAY) the composition is skewed to polar residues.

Belongs to the mastermind family. Interacts through its N-terminal region with the ankyrin repeat region of the Notch proteins NOTCH1, NOTCH2, NOTCH3 and NOTCH4. Forms a DNA-binding complex with Notch proteins and RBPSUH/RBP-J kappa.

It localises to the nucleus speckle. Acts as a transcriptional coactivator for NOTCH proteins. Has been shown to amplify NOTCH-induced transcription of HES1. The chain is Mastermind-like protein 3 from Homo sapiens (Human).